Reading from the N-terminus, the 70-residue chain is ATP synthase subunit c (70 aa).

A run of 2 helical transmembrane segments spans residues 4–24 (IAAGIAMFGAAIGGGIGDGIV) and 47–67 (FIGVGLVEAMPILAFVISLLV).

This sequence belongs to the ATPase C chain family. As to quaternary structure, F-type ATPases have 2 components, F(1) - the catalytic core - and F(0) - the membrane proton channel. F(1) has five subunits: alpha(3), beta(3), gamma(1), delta(1), epsilon(1). F(0) has three main subunits: a(1), b(2) and c(10-14). The alpha and beta chains form an alternating ring which encloses part of the gamma chain. F(1) is attached to F(0) by a central stalk formed by the gamma and epsilon chains, while a peripheral stalk is formed by the delta and b chains.

Its subcellular location is the cell membrane. Functionally, f(1)F(0) ATP synthase produces ATP from ADP in the presence of a proton or sodium gradient. F-type ATPases consist of two structural domains, F(1) containing the extramembraneous catalytic core and F(0) containing the membrane proton channel, linked together by a central stalk and a peripheral stalk. During catalysis, ATP synthesis in the catalytic domain of F(1) is coupled via a rotary mechanism of the central stalk subunits to proton translocation. Its function is as follows. Key component of the F(0) channel; it plays a direct role in translocation across the membrane. A homomeric c-ring of between 10-14 subunits forms the central stalk rotor element with the F(1) delta and epsilon subunits. In Pediococcus pentosaceus (strain ATCC 25745 / CCUG 21536 / LMG 10740 / 183-1w), this protein is ATP synthase subunit c.